A 156-amino-acid polypeptide reads, in one-letter code: C-type lectin lectoxin-Lei1 (156 aa).

Residues 1 to 23 (MRRFLFLSLGVLVVAFSLNGIGA) form the signal peptide. Intrachain disulfides connect Cys27–Cys38, Cys55–Cys154, and Cys129–Cys146. Residues 34–155 (FDRFCYKVIK…CESRNIFICK (122 aa)) form the C-type lectin domain. 2 N-linked (GlcNAc...) asparagine glycosylation sites follow: Asn60 and Asn99. The Sugar-binding signature appears at 119-121 (KRN). Ca(2+) is bound at residue Asn142.

It belongs to the true venom lectin family. As to expression, expressed by the venom gland.

Its subcellular location is the secreted. Its function is as follows. Lectin which recognizes specific carbohydrate structures and agglutinates a variety of animal cells by binding to cell-surface glycoproteins and glycolipids. May be a calcium-dependent lectin. The polypeptide is C-type lectin lectoxin-Lei1 (Leioheterodon madagascariensis (Malagasy giant hognose snake)).